We begin with the raw amino-acid sequence, 208 residues long: Large ribosomal subunit protein uL3 (208 aa).

It belongs to the universal ribosomal protein uL3 family. As to quaternary structure, part of the 50S ribosomal subunit. Forms a cluster with proteins L14 and L19.

Its function is as follows. One of the primary rRNA binding proteins, it binds directly near the 3'-end of the 23S rRNA, where it nucleates assembly of the 50S subunit. This Salinibacter ruber (strain DSM 13855 / M31) protein is Large ribosomal subunit protein uL3.